A 282-amino-acid chain; its full sequence is ATP phosphoribosyltransferase (282 aa).

This sequence belongs to the ATP phosphoribosyltransferase family. Long subfamily. The cofactor is Mg(2+).

It is found in the cytoplasm. It catalyses the reaction 1-(5-phospho-beta-D-ribosyl)-ATP + diphosphate = 5-phospho-alpha-D-ribose 1-diphosphate + ATP. The protein operates within amino-acid biosynthesis; L-histidine biosynthesis; L-histidine from 5-phospho-alpha-D-ribose 1-diphosphate: step 1/9. With respect to regulation, feedback inhibited by histidine. In terms of biological role, catalyzes the condensation of ATP and 5-phosphoribose 1-diphosphate to form N'-(5'-phosphoribosyl)-ATP (PR-ATP). Has a crucial role in the pathway because the rate of histidine biosynthesis seems to be controlled primarily by regulation of HisG enzymatic activity. This Haloarcula marismortui (strain ATCC 43049 / DSM 3752 / JCM 8966 / VKM B-1809) (Halobacterium marismortui) protein is ATP phosphoribosyltransferase.